We begin with the raw amino-acid sequence, 75 residues long: U6-lycotoxin-Ls1c (75 aa).

Residues 1–21 form the signal peptide; it reads MKLLLFTALVLVVISLIEVEA. The propeptide occupies 22–25; sequence ENER. Intrachain disulfides connect C27-C42, C34-C47, C41-C65, and C49-C63.

It belongs to the neurotoxin 19 (CSTX) family. 06 (U6-Lctx) subfamily. As to expression, expressed by the venom gland.

The protein resides in the secreted. The polypeptide is U6-lycotoxin-Ls1c (Lycosa singoriensis (Wolf spider)).